Here is a 207-residue protein sequence, read N- to C-terminus: NADH-ubiquinone oxidoreductase chain 6 (207 aa).

5 consecutive transmembrane segments (helical) span residues 1-21 (MDFLFYIFSSLTLISGSLVIQ), 28-48 (SVLFLVLVFFNAAGLLVLLGL), 50-70 (FFALIFLVVYVGAIAVLFLFV), 88-108 (YLPVGGVLGVLFLFEICILID), and 158-178 (FYFFLVASLILLVAMIGAIVL).

This sequence belongs to the complex I subunit 6 family.

It localises to the mitochondrion membrane. The catalysed reaction is a ubiquinone + NADH + 5 H(+)(in) = a ubiquinol + NAD(+) + 4 H(+)(out). In terms of biological role, core subunit of the mitochondrial membrane respiratory chain NADH dehydrogenase (Complex I) that is believed to belong to the minimal assembly required for catalysis. Complex I functions in the transfer of electrons from NADH to the respiratory chain. The immediate electron acceptor for the enzyme is believed to be ubiquinone. This chain is NADH-ubiquinone oxidoreductase chain 6 (ND6), found in Prototheca wickerhamii.